A 296-amino-acid polypeptide reads, in one-letter code: uncharacterized protein (296 aa).

CBS domains are found at residues 176-232 (GIKE…DKKV) and 236-292 (MRRD…KFPE).

This is an uncharacterized protein from Methanocaldococcus jannaschii (strain ATCC 43067 / DSM 2661 / JAL-1 / JCM 10045 / NBRC 100440) (Methanococcus jannaschii).